The following is a 101-amino-acid chain: UPF0235 protein Cphamn1_2066 (101 aa).

This sequence belongs to the UPF0235 family.

The chain is UPF0235 protein Cphamn1_2066 from Chlorobium phaeobacteroides (strain BS1).